The primary structure comprises 78 residues: Large ribosomal subunit protein bL28 (78 aa).

Belongs to the bacterial ribosomal protein bL28 family.

The sequence is that of Large ribosomal subunit protein bL28 from Acinetobacter baylyi (strain ATCC 33305 / BD413 / ADP1).